The chain runs to 410 residues: Lipoyl synthase, mitochondrial (410 aa).

Residues C125, C130, C136, C157, C161, C164, and S373 each coordinate [4Fe-4S] cluster. The Radical SAM core domain maps to 140–362; it reads SDEEGTATAT…EKEAMDMGFL (223 aa).

It belongs to the radical SAM superfamily. Lipoyl synthase family. It depends on [4Fe-4S] cluster as a cofactor.

It is found in the mitochondrion. It catalyses the reaction [[Fe-S] cluster scaffold protein carrying a second [4Fe-4S](2+) cluster] + N(6)-octanoyl-L-lysyl-[protein] + 2 oxidized [2Fe-2S]-[ferredoxin] + 2 S-adenosyl-L-methionine + 4 H(+) = [[Fe-S] cluster scaffold protein] + N(6)-[(R)-dihydrolipoyl]-L-lysyl-[protein] + 4 Fe(3+) + 2 hydrogen sulfide + 2 5'-deoxyadenosine + 2 L-methionine + 2 reduced [2Fe-2S]-[ferredoxin]. Its pathway is protein modification; protein lipoylation via endogenous pathway; protein N(6)-(lipoyl)lysine from octanoyl-[acyl-carrier-protein]: step 2/2. Catalyzes the radical-mediated insertion of two sulfur atoms into the C-6 and C-8 positions of the octanoyl moiety bound to the lipoyl domains of lipoate-dependent enzymes, thereby converting the octanoylated domains into lipoylated derivatives. The protein is Lipoyl synthase, mitochondrial of Leishmania major.